A 461-amino-acid chain; its full sequence is Elongation factor 1-alpha (461 aa).

Residue glycine 2 is modified to N,N,N-trimethylglycine. In terms of domain architecture, tr-type G spans 5-242 (KIHINIVVIG…DAILPPSRPT (238 aa)). A G1 region spans residues 14 to 21 (GHVDSGKS). Residue 14 to 21 (GHVDSGKS) coordinates GTP. The G2 stretch occupies residues 70-74 (GITID). The tract at residues 91–94 (DAPG) is G3. GTP-binding positions include 153-156 (NKMD) and 194-196 (SGW). Residues 153-156 (NKMD) form a G4 region. Positions 194 to 196 (SGW) are G5. 5-glutamyl glycerylphosphorylethanolamine occurs at positions 301 and 374.

This sequence belongs to the TRAFAC class translation factor GTPase superfamily. Classic translation factor GTPase family. EF-Tu/EF-1A subfamily.

The protein resides in the cytoplasm. It carries out the reaction GTP + H2O = GDP + phosphate + H(+). In terms of biological role, translation elongation factor that catalyzes the GTP-dependent binding of aminoacyl-tRNA (aa-tRNA) to the A-site of ribosomes during the elongation phase of protein synthesis. Base pairing between the mRNA codon and the aa-tRNA anticodon promotes GTP hydrolysis, releasing the aa-tRNA from EEF1A1 and allowing its accommodation into the ribosome. The growing protein chain is subsequently transferred from the P-site peptidyl tRNA to the A-site aa-tRNA, extending it by one amino acid through ribosome-catalyzed peptide bond formation. In Oryzias latipes (Japanese rice fish), this protein is Elongation factor 1-alpha (eef1a).